The chain runs to 1935 residues: Myosin-7 (1935 aa).

Residues 32-81 (DLKKDVFVPDDKEEFVKAKIISREGGKITAETEHGKTVTVKEDQVLQQNP) form the Myosin N-terminal SH3-like domain. Residues 85–778 (DKIEDMAMLT…LLGLLEEMRD (694 aa)) enclose the Myosin motor domain. Lys129 bears the N6,N6,N6-trimethyllysine mark. 178–185 (GESGAGKT) provides a ligand contact to ATP. Position 378 is a phosphothreonine (Thr378). 2 actin-binding regions span residues 655-677 (LNKLMTNLRSTHPHFVRCIIPNE) and 757-771 (RFGHTKVFFKAGLLG). The IQ domain maps to 781–810 (LSRIITRIQAQSRGVLARMEFKKLLERRDS). Residues 839 to 1935 (LLKSAETEKE…DIGTKGLNEE (1097 aa)) are a coiled coil. Phosphoserine occurs at positions 1137 and 1269. The residue at position 1282 (Thr1282) is a Phosphothreonine. At Tyr1308 the chain carries Phosphotyrosine. Residue Thr1309 is modified to Phosphothreonine. Ser1510 carries the phosphoserine modification. Thr1513 is subject to Phosphothreonine. A disordered region spans residues 1907 to 1935 (EERADIAESQVNKLRAKSRDIGTKGLNEE). The span at 1923 to 1935 (KSRDIGTKGLNEE) shows a compositional bias: basic and acidic residues.

The protein belongs to the TRAFAC class myosin-kinesin ATPase superfamily. Myosin family. In terms of assembly, muscle myosin is a hexameric protein that consists of 2 heavy chain subunits (MHC), 2 alkali light chain subunits (MLC) and 2 regulatory light chain subunits (MLC-2). Interacts with ECPAS. Interacts (via C-terminus) with LRRC39.

The protein localises to the cytoplasm. Its subcellular location is the myofibril. It localises to the sarcomere. Functionally, myosins are actin-based motor molecules with ATPase activity essential for muscle contraction. Forms regular bipolar thick filaments that, together with actin thin filaments, constitute the fundamental contractile unit of skeletal and cardiac muscle. The protein is Myosin-7 (MYH7) of Equus caballus (Horse).